The primary structure comprises 74 residues: Cecropin-P4 (74 aa).

The first 13 residues, 1-13 (MFLMYLLVQTTES), serve as a signal peptide directing secretion. Positions 45–74 (HRRSVAHQEEASLHVKTDELPSPDTVREQL) are cleaved as a propeptide — removed in mature form. A disordered region spans residues 51–74 (HQEEASLHVKTDELPSPDTVREQL).

It belongs to the cecropin family. As to expression, expressed in the body wall, intestine, uterus and ovary.

It localises to the secreted. Its function is as follows. Has antibacterial activity against several Gram-positive and Gram-negative bacteria. Is weakly active against yeasts. Acts by a nonpore mechanism. This chain is Cecropin-P4 (ASCEC-4), found in Ascaris suum (Pig roundworm).